The chain runs to 102 residues: NADH-quinone oxidoreductase subunit K (102 aa).

The next 3 helical transmembrane spans lie at 5 to 25, 31 to 51, and 62 to 82; these read LAHY…GIFL, IILL…FVAF, and VFVF…LAIL.

It belongs to the complex I subunit 4L family. In terms of assembly, NDH-1 is composed of 14 different subunits. Subunits NuoA, H, J, K, L, M, N constitute the membrane sector of the complex.

It is found in the cell inner membrane. It carries out the reaction a quinone + NADH + 5 H(+)(in) = a quinol + NAD(+) + 4 H(+)(out). Functionally, NDH-1 shuttles electrons from NADH, via FMN and iron-sulfur (Fe-S) centers, to quinones in the respiratory chain. The immediate electron acceptor for the enzyme in this species is believed to be ubiquinone. Couples the redox reaction to proton translocation (for every two electrons transferred, four hydrogen ions are translocated across the cytoplasmic membrane), and thus conserves the redox energy in a proton gradient. The polypeptide is NADH-quinone oxidoreductase subunit K (Bordetella avium (strain 197N)).